Reading from the N-terminus, the 580-residue chain is PTS system fructose-specific EIIB'BC component (580 aa).

2 consecutive PTS EIIB type-2 domains span residues 1-99 and 120-215; these read MSSS…QLAA and IVAI…KALA. The active-site Phosphocysteine intermediate; for EIIB activity is cysteine 126. Position 126 is a phosphocysteine; by EIIA (cysteine 126). Residues 243-580 form the PTS EIIC type-2 domain; it reads AYKHLMTGVS…LKKPVADVIA (338 aa). 9 consecutive transmembrane segments (helical) span residues 254 to 274, 289 to 309, 332 to 352, 369 to 389, 410 to 430, 451 to 471, 483 to 503, 509 to 529, and 549 to 571; these read MLPFVTAGGLLIALAFALGGI, LFQIGAKAGFTLMVPALAGYI, LNAGFLGGIIAGFIAGYGVAA, VLILPVLGTLLVGLAMMYVFG, SALLLGLLLGGMMAFDMGGPV, AAAMVAGMTPPLGIALATWVF, ATAAGVLGLAFVTEGAIPYAA, TIPALVIGSAVAGAISMTAGA, and HLLNYVLALVVGVVVTAVALRLL.

It localises to the cell inner membrane. The catalysed reaction is D-fructose(out) + N(pros)-phospho-L-histidyl-[protein] = D-fructose 1-phosphate(in) + L-histidyl-[protein]. The phosphoenolpyruvate-dependent sugar phosphotransferase system (sugar PTS), a major carbohydrate active transport system, catalyzes the phosphorylation of incoming sugar substrates concomitantly with their translocation across the cell membrane. The enzyme II FruAB PTS system is involved in fructose transport. The polypeptide is PTS system fructose-specific EIIB'BC component (Xanthomonas campestris pv. campestris (strain ATCC 33913 / DSM 3586 / NCPPB 528 / LMG 568 / P 25)).